A 241-amino-acid chain; its full sequence is Carboxy-S-adenosyl-L-methionine synthase (241 aa).

S-adenosyl-L-methionine is bound by residues Y38, 63–65 (GCS), 88–89 (DN), 116–117 (DI), N131, and R198.

It belongs to the class I-like SAM-binding methyltransferase superfamily. Cx-SAM synthase family. As to quaternary structure, homodimer.

The catalysed reaction is prephenate + S-adenosyl-L-methionine = carboxy-S-adenosyl-L-methionine + 3-phenylpyruvate + H2O. In terms of biological role, catalyzes the conversion of S-adenosyl-L-methionine (SAM) to carboxy-S-adenosyl-L-methionine (Cx-SAM). The sequence is that of Carboxy-S-adenosyl-L-methionine synthase from Pseudoalteromonas translucida (strain TAC 125).